We begin with the raw amino-acid sequence, 510 residues long: Probable cytosol aminopeptidase (510 aa).

The Mn(2+) site is built by Lys282 and Asp287. Residue Lys294 is part of the active site. Residues Asp305, Asp364, and Glu366 each contribute to the Mn(2+) site. The active site involves Arg368.

The protein belongs to the peptidase M17 family. Mn(2+) serves as cofactor.

It is found in the cytoplasm. The enzyme catalyses Release of an N-terminal amino acid, Xaa-|-Yaa-, in which Xaa is preferably Leu, but may be other amino acids including Pro although not Arg or Lys, and Yaa may be Pro. Amino acid amides and methyl esters are also readily hydrolyzed, but rates on arylamides are exceedingly low.. It catalyses the reaction Release of an N-terminal amino acid, preferentially leucine, but not glutamic or aspartic acids.. Presumably involved in the processing and regular turnover of intracellular proteins. Catalyzes the removal of unsubstituted N-terminal amino acids from various peptides. In Cupriavidus metallidurans (strain ATCC 43123 / DSM 2839 / NBRC 102507 / CH34) (Ralstonia metallidurans), this protein is Probable cytosol aminopeptidase.